A 162-amino-acid polypeptide reads, in one-letter code: Caveolin-2 (162 aa).

At 1 to 86 (MGLETEKADV…FEISKYVLYK (86 aa)) the chain is on the cytoplasmic side. Residue Tyr19 is modified to Phosphotyrosine; by SRC. 2 positions are modified to phosphoserine: Ser20 and Ser23. Positions 87–107 (FLTVFLAIPLAFAAGVLFAVL) form an intramembrane region, helical. The Cytoplasmic portion of the chain corresponds to 108–162 (SCLHIWILMPFVKTCLMVLPSVQTIWRSVTDVVIAPLCASIGRSFSSVGLQLSHD).

Belongs to the caveolin family. In terms of assembly, monomer or homodimer. Interacts with CAV1; the interaction forms a stable heterooligomeric complex that is required for targeting to lipid rafts and for caveolae formation. Tyrosine phosphorylated forms do not form heterooligomers with the Tyr-19-phosphorylated form existing as a monomer or dimer. Interacts (tyrosine phosphorylated form) with the SH2 domain-containing proteins, RASA1, NCK1 and SRC. Interacts (tyrosine phosphorylated form) with INSR. Interacts (Tyr-19 phosphorylated form) with MAPK1 (phosphorylated form); the interaction, promoted by insulin, leads to nuclear location and MAPK1 activation. Interacts with STAT3; the interaction is increased on insulin-induced tyrosine phosphorylation leading to STAT activation. Phosphorylated on serine and tyrosine residues. CAV1 promotes phosphorylation on Ser-23 which then targets the complex to the plasma membrane, lipid rafts and caveolae. Phosphorylation on Tyr-19 is required for insulin-induced phosphorylation of MAPK1 and DNA binding of STAT3. Tyrosine phosphorylation is induced by both EGF and insulin.

The protein resides in the nucleus. It is found in the cytoplasm. It localises to the golgi apparatus membrane. The protein localises to the cell membrane. Its subcellular location is the membrane. The protein resides in the caveola. Its function is as follows. May act as a scaffolding protein within caveolar membranes. Interacts directly with G-protein alpha subunits and can functionally regulate their activity. Acts as an accessory protein in conjunction with CAV1 in targeting to lipid rafts and driving caveolae formation. Positive regulator of cellular mitogenesis of the MAPK signaling pathway. Required for the insulin-stimulated nuclear translocation and activation of MAPK1 and STAT3, and the subsequent regulation of cell cycle progression. This is Caveolin-2 (CAV2) from Oryctolagus cuniculus (Rabbit).